A 599-amino-acid polypeptide reads, in one-letter code: Calmodulin-binding protein 60 E (599 aa).

The segment at 1–21 is disordered; it reads MNKRGYECSQEDTDKLPESKR. Positions 1 to 80 are calmodulin-binding; that stretch reads MNKRGYECSQ…LTSRSPEPKR (80 aa). The segment at 150 to 273 is DNA-binding; the sequence is EDDEDWTREH…VLHKKLLKAN (124 aa).

It belongs to the plant ACBP60 protein family. As to quaternary structure, interacts with calmodulin (CaM).

It localises to the nucleus. In terms of biological role, transcription activator that binds DNA in a sequence-specific manner, likely 5'-GAAATTTTGG-3', to promote the expression of target genes. The sequence is that of Calmodulin-binding protein 60 E from Arabidopsis thaliana (Mouse-ear cress).